The following is a 264-amino-acid chain: Glutamate racemase (264 aa).

Substrate-binding positions include 10–11 (DS) and 42–43 (YG). Residue cysteine 73 is the Proton donor/acceptor of the active site. Residue 74 to 75 (NT) participates in substrate binding. Cysteine 183 serves as the catalytic Proton donor/acceptor. 184–185 (TH) serves as a coordination point for substrate.

Belongs to the aspartate/glutamate racemases family.

It catalyses the reaction L-glutamate = D-glutamate. The protein operates within cell wall biogenesis; peptidoglycan biosynthesis. Provides the (R)-glutamate required for cell wall biosynthesis. This Streptococcus equi subsp. zooepidemicus (strain H70) protein is Glutamate racemase.